The primary structure comprises 146 residues: Hemoglobin subunit beta-S/F (146 aa).

N-acetylvaline is present on valine 1. Residues 2–146 enclose the Globin domain; that stretch reads HLTDGEKNAI…VANALSHKYH (145 aa). Residue serine 44 is modified to Phosphoserine. Lysine 59 is subject to N6-acetyllysine. Histidine 63 is a binding site for heme b. Lysine 82 is subject to N6-acetyllysine. Histidine 92 lines the heme b pocket. Cysteine 93 carries the S-nitrosocysteine modification. An N6-acetyllysine modification is found at lysine 144.

Belongs to the globin family. In terms of assembly, heterotetramer of two alpha chains and two beta chains. Red blood cells.

Its function is as follows. Involved in oxygen transport from the lung to the various peripheral tissues. This is Hemoglobin subunit beta-S/F from Urocitellus townsendii (Townsend's ground squirrel).